A 415-amino-acid chain; its full sequence is Polyadenylate-binding protein RBP45C (415 aa).

The segment at 1 to 77 (MMQQPPPASN…GGSQNPGSAG (77 aa)) is disordered. Positions 23–64 (QQAYLQQQQSWMMQHQQQQQGQPPAGWNQQSAPSSGQPQQQQ) are enriched in low complexity. 3 RRM domains span residues 80–160 (RSLW…WAQL), 173–252 (HTVF…PAAN), and 278–350 (TTIF…WGRS). Positions 344–356 (RLSWGRSPSNKQT) are enriched in polar residues. Residues 344 to 369 (RLSWGRSPSNKQTQPDQAQYGGGGGY) are disordered.

Belongs to the polyadenylate-binding RBP45 family. As to quaternary structure, interacts with the poly(A) tail of mRNA in nucleus. In terms of tissue distribution, mostly expressed in seedlings and stems, and, to a lower extent, in leaves and flowers.

It is found in the nucleus. Heterogeneous nuclear ribonucleoprotein (hnRNP)-protein binding the poly(A) tail of mRNA and probably involved in some steps of pre-mRNA maturation. The sequence is that of Polyadenylate-binding protein RBP45C (RBP45C) from Arabidopsis thaliana (Mouse-ear cress).